We begin with the raw amino-acid sequence, 351 residues long: Probable dual-specificity RNA methyltransferase RlmN (351 aa).

Catalysis depends on Glu-92, which acts as the Proton acceptor. One can recognise a Radical SAM core domain in the interval 98 to 332 (TDQRLTVCIS…VSLRASRGLD (235 aa)). The cysteines at positions 105 and 337 are disulfide-linked. Residues Cys-112, Cys-116, and Cys-119 each coordinate [4Fe-4S] cluster. S-adenosyl-L-methionine is bound by residues 159–160 (GE), Ser-189, 218–220 (SLH), and Asn-294. The active-site S-methylcysteine intermediate is the Cys-337.

The protein belongs to the radical SAM superfamily. RlmN family. It depends on [4Fe-4S] cluster as a cofactor.

The protein resides in the cytoplasm. The catalysed reaction is adenosine(2503) in 23S rRNA + 2 reduced [2Fe-2S]-[ferredoxin] + 2 S-adenosyl-L-methionine = 2-methyladenosine(2503) in 23S rRNA + 5'-deoxyadenosine + L-methionine + 2 oxidized [2Fe-2S]-[ferredoxin] + S-adenosyl-L-homocysteine. The enzyme catalyses adenosine(37) in tRNA + 2 reduced [2Fe-2S]-[ferredoxin] + 2 S-adenosyl-L-methionine = 2-methyladenosine(37) in tRNA + 5'-deoxyadenosine + L-methionine + 2 oxidized [2Fe-2S]-[ferredoxin] + S-adenosyl-L-homocysteine. Functionally, specifically methylates position 2 of adenine 2503 in 23S rRNA and position 2 of adenine 37 in tRNAs. This chain is Probable dual-specificity RNA methyltransferase RlmN, found in Synechococcus sp. (strain CC9902).